Reading from the N-terminus, the 973-residue chain is Protein HypA (973 aa).

This Clostridium perfringens (strain 13 / Type A) protein is Protein HypA (hypA).